We begin with the raw amino-acid sequence, 351 residues long: Glycerol-1-phosphate dehydrogenase [NAD(P)+] (351 aa).

Residues 97–101 (GKVID) and 119–122 (TSPS) contribute to the NAD(+) site. Position 124 (D124) interacts with substrate. S128 contacts NAD(+). D171 lines the substrate pocket. Zn(2+)-binding residues include D171 and H251. Residue H255 participates in substrate binding. H267 serves as a coordination point for Zn(2+).

This sequence belongs to the glycerol-1-phosphate dehydrogenase family. In terms of assembly, homodimer. Zn(2+) serves as cofactor.

The protein localises to the cytoplasm. It catalyses the reaction sn-glycerol 1-phosphate + NAD(+) = dihydroxyacetone phosphate + NADH + H(+). The catalysed reaction is sn-glycerol 1-phosphate + NADP(+) = dihydroxyacetone phosphate + NADPH + H(+). Its pathway is membrane lipid metabolism; glycerophospholipid metabolism. Functionally, catalyzes the NAD(P)H-dependent reduction of dihydroxyacetonephosphate (DHAP or glycerone phosphate) to glycerol 1-phosphate (G1P). The G1P thus generated is used as the glycerophosphate backbone of phospholipids in the cellular membranes of Archaea. This is Glycerol-1-phosphate dehydrogenase [NAD(P)+] from Saccharolobus islandicus (strain L.S.2.15 / Lassen #1) (Sulfolobus islandicus).